Consider the following 311-residue polypeptide: JNK1/MAPK8-associated membrane protein (311 aa).

The Lumenal portion of the chain corresponds to 1-57; that stretch reads MAVDIQPACLGLYCGKTLLFKNGSSEIYGECGVCPRGQRTNAQKYCQPCTESPELYD. A glycan (N-linked (GlcNAc...) asparagine) is linked at asparagine 22. The chain crosses the membrane as a helical span at residues 58-78; that stretch reads WLYLGFMAMLPLVLHWFFIEW. At 79-87 the chain is on the cytoplasmic side; it reads YSGKKSSSA. Residues 88–108 form a helical membrane-spanning segment; the sequence is LFQHITALFECTMAAIITLLV. Over 109-149 the chain is Lumenal; it reads SDPVGVLYIRSCRVLMLSDWYTMLYNPSPDYVTTVHCTHEA. The chain crosses the membrane as a helical span at residues 150–170; that stretch reads VYPLYTIVFVYYAFCLVLMML. The Cytoplasmic segment spans residues 171–188; the sequence is LRPLLVKKIACGLGKSDR. A helical transmembrane segment spans residues 189–209; the sequence is FKSIYAALYFFPILTVLQAVG. Glycine 210 is a topological domain (lumenal). Residues 211–231 form a helical membrane-spanning segment; that stretch reads GLLYYAFPYIILVLSLVTLAV. Residues 232-250 are Cytoplasmic-facing; it reads YMSASEIENCYDLLVRKKR. A helical transmembrane segment spans residues 251–271; that stretch reads LIVLFSHWLLHAYGIVSISRV. The Lumenal portion of the chain corresponds to 272–277; sequence DRLEHD. A helical membrane pass occupies residues 278–298; the sequence is LPLLALVPTPALFYLFTAKFT. Residues 299–311 are Cytoplasmic-facing; that stretch reads EPSRILSEGANGH.

As to quaternary structure, interacts with RNF5 and MAPK8, but not with MAPK9. Binding to MAPK8 occurs before and after exposure to stress, such as UV irradiation. After exposure to stress, interacts with phosphorylated MAPK8. Competes with DUSP10 for MAPK8 binding. Associates with multiple components of the proteasome and with ERAD regulatory proteins, including AMFR/GP78, CANX, PSMC1, PSMC2, PSMC3/TBP1, PSMC5, PSMC6, PSMD8, SEC61-ALPHA and UFD1. Ubiquitinated by RNF5 via 'Lys-63'-linked ubiquitin linkage in a UBE2N-dependent manner. Ubiquitination decreases association with components of the proteasome and ERAD. As to expression, expressed in numerous tissues, including brain, spleen, thymus, liver, kidney and testis.

The protein localises to the endoplasmic reticulum membrane. Its function is as follows. Regulates the duration of MAPK8 activity in response to various stress stimuli. Facilitates degradation of misfolded endoplasmic reticulum (ER) proteins through the recruitment of components of the proteasome and endoplasmic reticulum-associated degradation (ERAD) system. The polypeptide is JNK1/MAPK8-associated membrane protein (Jkamp) (Mus musculus (Mouse)).